A 78-amino-acid polypeptide reads, in one-letter code: UPF0349 protein RBAM_029300 (78 aa).

The protein belongs to the UPF0349 family.

The chain is UPF0349 protein RBAM_029300 from Bacillus velezensis (strain DSM 23117 / BGSC 10A6 / LMG 26770 / FZB42) (Bacillus amyloliquefaciens subsp. plantarum).